Here is a 282-residue protein sequence, read N- to C-terminus: Protein FRG2-like-2 (282 aa).

Residues 1 to 10 (MGKGNEDPDL) are compositionally biased toward basic and acidic residues. 2 disordered regions span residues 1–96 (MGKG…QENC) and 249–282 (GPGD…LGAP). Polar residues-rich tracts occupy residues 13–31 (SSIQ…SFTE), 58–68 (RQAGSDPNPNK), and 79–94 (GNST…SYQE).

It belongs to the FRG2 family.

The protein localises to the nucleus. This chain is Protein FRG2-like-2 (FRG2C), found in Homo sapiens (Human).